The sequence spans 1268 residues: MSSVAVLTQESFAEHRSGLVPQQIKVATLNSEEENDPPTYKDAFPPLPEKAACLESAQEPAGAWSNKIRPIKASVITQVFHVPLEERKYKDMNQFGEGEQAKICLEIMQRTGAHLELSLAKDQGLSIMVSGKLDAVMKARKDIVARLQTQASATVPIPKEHHRFVIGKNGEKLQDLELKTATKIQIPRPDDPSNQIKITGTKEGIEKARHEVLLISAEQDKRAVERLEVEKAFHPFIAGPYNRLVGEIMQETGTRINIPPPSVNRTEIVFTGEKEQLAQAVARIKKIYEEKKKKTTTIAVEVKKSQHKYVIGPKGNSLQEILERTGVSVEIPPSDSISETVILRGEPEKLGQALTEVYAKANSFTVSSVSAPSWLHRFIIGKKGQNLAKITQQMPKVHIEFTEGEDKITLEGPTEDVNVAQEQIEGMVKDLINRMDYVEINIDHKFHRHLIGKSGANINRIKDQYKVSVRIPPDSEKSNLIRIEGDPQGVQQAKRELLELASRMENERTKDLIIEQRFHRTIIGQKGERIREIRDKFPEVIINFPDPAQKSDIVQLRGPKNEVEKCTKYMQKMVADLVENSYSISVPIFKQFHKNIIGKGGANIKKIREESNTKIDLPAENSNSETIIITGKRANCEAARSRILSIQKDLANIAEVEVSIPAKLHNSLIGTKGRLIRSIMEECGGVHIHFPVEGSGSDTVVIRGPSSDVEKAKKQLLHLAEEKQTKSFTVDIRAKPEYHKFLIGKGGGKIRKVRDSTGARIIFPAAEDKDQDLITIIGKEDAVREAQKELEALIQNLENVVEDYMLVDPKHHRHFVIRRGQVLREIAEEYGGVMVSFPRSGTQSDKVTLKGAKDCVEAAKKRIQEIIEDLEAQVTVECAIPQKFHRSVMGPKGSRIQQITRDYNVQIKFPDREENPVHSVEPSIQENGDEAGEGREAKETDPGSPRRCDIIIISGRKEKCEAAKEALEALVPVTIEVEVPFDLHRYIIGQKGSGIRKMMDEFEVNIHVPAPELQSDTIAITGLAANLDRAKAGLLDRVKELQAEQEDRALRSFKLSVTVDPKYHPKIIGRKGAVITQIRLEHEVNIQFPDKDDGNQPQDQITITGYEKNTEAARDAILKIVGELEQMVSEDVPLDHRVHARIIGARGKAIRKIMDEFKVDIRFPQSGAPDPNCVTVTGLPENVEEAIDHILNLEEEYLADVVDSEALQVYMKPPAHEESRAPSKGFVVRDAPWTSNSSEKAPDMSSSEEFPSFGAQVAPKTLPWGPKR.

N-acetylserine is present on serine 2. A Phosphothreonine modification is found at threonine 8. 2 positions are modified to phosphoserine: serine 11 and serine 31. KH domains are found at residues 150 to 212, 222 to 284, 295 to 357, 364 to 424, 435 to 497, 507 to 570, and 581 to 643; these read QASA…RHEV, RAVE…VARI, TTTI…LTEV, FTVS…QEQI, MDYV…KREL, ERTK…TKYM, and SYSI…RSRI. A phosphothreonine mark is found at threonine 295 and threonine 296. Serine 317 is subject to Phosphoserine. At tyrosine 437 the chain carries Phosphotyrosine. Serine 645 is subject to Phosphoserine. KH domains follow at residues 653–716, 727–790, 800–863, 873–967, 972–1034, 1052–1117, and 1127–1190; these read IAEV…KKQL, SFTV…QKEL, VVED…KKRI, QVTV…KEAL, PVTI…KAGL, SFKL…RDAI, and MVSE…IDHI. A disordered region spans residues 910 to 947; sequence PDREENPVHSVEPSIQENGDEAGEGREAKETDPGSPRR. Residues 932 to 947 are compositionally biased toward basic and acidic residues; the sequence is GEGREAKETDPGSPRR. Residue lysine 991 is modified to N6-acetyllysine. The disordered stretch occupies residues 1213 to 1268; it reads PPAHEESRAPSKGFVVRDAPWTSNSSEKAPDMSSSEEFPSFGAQVAPKTLPWGPKR. A compositionally biased stretch (polar residues) spans 1233-1249; it reads WTSNSSEKAPDMSSSEE. Serine 1247 and serine 1252 each carry phosphoserine.

Its subcellular location is the cytoplasm. The protein resides in the nucleus. Functionally, appears to play a role in cell sterol metabolism. It may function to protect cells from over-accumulation of cholesterol. In Mus musculus (Mouse), this protein is Vigilin (Hdlbp).